Here is a 146-residue protein sequence, read N- to C-terminus: Endoribonuclease YbeY (146 aa).

His108, His112, and His118 together coordinate Zn(2+).

This sequence belongs to the endoribonuclease YbeY family. Requires Zn(2+) as cofactor.

The protein resides in the cytoplasm. Functionally, single strand-specific metallo-endoribonuclease involved in late-stage 70S ribosome quality control and in maturation of the 3' terminus of the 16S rRNA. The polypeptide is Endoribonuclease YbeY (Aster yellows witches'-broom phytoplasma (strain AYWB)).